The primary structure comprises 87 residues: Small ribosomal subunit protein bS16 (87 aa).

The protein belongs to the bacterial ribosomal protein bS16 family.

This chain is Small ribosomal subunit protein bS16, found in Ehrlichia ruminantium (strain Gardel).